The following is a 212-amino-acid chain: MIKLSYLTSYITCPRLCYFRVHVGEKRFTELTAVREIYLSLKQGFDLDWAKKRAKALHGAFDEEAFRSAANKFIFPQIDCKSVEVDATIKSKSLGLLVSVDEIVECDGELLPLFLGLNPPENGVWFKDMVKAGAAALAGNYSKALIYYGYTGDLRPVEVTFSLKKKVIKLIERVKLIQRGFLPERKESRYCNYCSFSEDCKSRAETFASKFL.

This is an uncharacterized protein from Archaeoglobus fulgidus (strain ATCC 49558 / DSM 4304 / JCM 9628 / NBRC 100126 / VC-16).